A 167-amino-acid chain; its full sequence is CGG triplet repeat-binding protein 1 (167 aa).

Ser56 is modified (phosphoserine). The short motif at 80–84 is the Nuclear localization signal element; the sequence is RKKQR. Ser164 carries the phosphoserine modification.

Ubiquitous. Highly expressed in placenta, thymus, lymph nodes, cerebellum and cerebral cortex. Low expression in other regions of the brain.

The protein localises to the nucleus. In terms of biological role, binds to nonmethylated 5'-d(CGG)(n)-3' trinucleotide repeats in the FMR1 promoter. May play a role in regulating FMR1 promoter. The protein is CGG triplet repeat-binding protein 1 (CGGBP1) of Homo sapiens (Human).